A 471-amino-acid polypeptide reads, in one-letter code: Sulfate adenylyltransferase subunit 1 (471 aa).

Positions 22–237 (KELLRFLTCG…LESVQITGAK (216 aa)) constitute a tr-type G domain. The interval 31 to 38 (GSVDDGKS) is G1. Residue 31–38 (GSVDDGKS) coordinates GTP. Positions 89-93 (GITID) are G2. The G3 stretch occupies residues 110–113 (DTPG). GTP is bound by residues 110–114 (DTPGH) and 165–168 (NKMD). The segment at 165-168 (NKMD) is G4. The interval 202-204 (SAL) is G5.

It belongs to the TRAFAC class translation factor GTPase superfamily. Classic translation factor GTPase family. CysN/NodQ subfamily. Heterodimer composed of CysD, the smaller subunit, and CysN.

The enzyme catalyses sulfate + ATP + H(+) = adenosine 5'-phosphosulfate + diphosphate. It participates in sulfur metabolism; hydrogen sulfide biosynthesis; sulfite from sulfate: step 1/3. In terms of biological role, with CysD forms the ATP sulfurylase (ATPS) that catalyzes the adenylation of sulfate producing adenosine 5'-phosphosulfate (APS) and diphosphate, the first enzymatic step in sulfur assimilation pathway. APS synthesis involves the formation of a high-energy phosphoric-sulfuric acid anhydride bond driven by GTP hydrolysis by CysN coupled to ATP hydrolysis by CysD. This is Sulfate adenylyltransferase subunit 1 from Saccharophagus degradans (strain 2-40 / ATCC 43961 / DSM 17024).